The chain runs to 83 residues: Exodeoxyribonuclease 7 small subunit (83 aa).

The protein belongs to the XseB family. As to quaternary structure, heterooligomer composed of large and small subunits.

The protein localises to the cytoplasm. It carries out the reaction Exonucleolytic cleavage in either 5'- to 3'- or 3'- to 5'-direction to yield nucleoside 5'-phosphates.. Functionally, bidirectionally degrades single-stranded DNA into large acid-insoluble oligonucleotides, which are then degraded further into small acid-soluble oligonucleotides. The protein is Exodeoxyribonuclease 7 small subunit of Rhodopseudomonas palustris (strain HaA2).